Consider the following 721-residue polypeptide: Catalase-peroxidase 1 (721 aa).

Residues 98–226 constitute a cross-link (tryptophyl-tyrosyl-methioninium (Trp-Tyr) (with M-252)); that stretch reads WHAAGTYRIA…LAAVMMGLIY (129 aa). His99 acts as the Proton acceptor in catalysis. The tryptophyl-tyrosyl-methioninium (Tyr-Met) (with W-98) cross-link spans 226–252; that stretch reads YVNPEGVDGQPDPLKTAHDVRVTFARM. His267 serves as a coordination point for heme b.

This sequence belongs to the peroxidase family. Peroxidase/catalase subfamily. Homodimer or homotetramer. It depends on heme b as a cofactor. Post-translationally, formation of the three residue Trp-Tyr-Met cross-link is important for the catalase, but not the peroxidase activity of the enzyme.

The enzyme catalyses H2O2 + AH2 = A + 2 H2O. The catalysed reaction is 2 H2O2 = O2 + 2 H2O. Bifunctional enzyme with both catalase and broad-spectrum peroxidase activity. This Vibrio parahaemolyticus serotype O3:K6 (strain RIMD 2210633) protein is Catalase-peroxidase 1.